The following is a 150-amino-acid chain: 1,4-dihydroxy-2-naphthoyl-CoA hydrolase (150 aa).

The active site involves Asp-19.

Belongs to the 4-hydroxybenzoyl-CoA thioesterase family. DHNA-CoA hydrolase subfamily.

It carries out the reaction 1,4-dihydroxy-2-naphthoyl-CoA + H2O = 1,4-dihydroxy-2-naphthoate + CoA + H(+). It participates in cofactor biosynthesis; phylloquinone biosynthesis. It functions in the pathway quinol/quinone metabolism; 1,4-dihydroxy-2-naphthoate biosynthesis; 1,4-dihydroxy-2-naphthoate from chorismate: step 7/7. Catalyzes the hydrolysis of 1,4-dihydroxy-2-naphthoyl-CoA (DHNA-CoA) to 1,4-dihydroxy-2-naphthoate (DHNA), a reaction involved in phylloquinone (vitamin K1) biosynthesis. In Prochlorococcus marinus subsp. pastoris (strain CCMP1986 / NIES-2087 / MED4), this protein is 1,4-dihydroxy-2-naphthoyl-CoA hydrolase.